The sequence spans 422 residues: AP-1 complex subunit mu-1-I (422 aa).

One can recognise an MHD domain in the interval 167 to 420 (KNEVFLDVIE…ITQNGEYEMR (254 aa)).

Belongs to the adaptor complexes medium subunit family. Adaptor protein complex 1 (AP-1) is a heterotetramer composed of two large adaptins (gamma- and beta'-type subunits), a medium adaptin (mu-type subunit AP47) and a small adaptin (sigma-type subunit AP19). Interacts (via N-terminus) with kvs-4. In terms of tissue distribution, expressed in the cholinergic motor neuron DA9.

The protein localises to the golgi apparatus. It is found in the cytoplasmic vesicle. The protein resides in the clathrin-coated vesicle membrane. Its subcellular location is the cell projection. It localises to the dendrite. In terms of biological role, component of the adaptor complexes which link clathrin to receptors in coated vesicles. Clathrin-associated protein complexes are believed to interact with the cytoplasmic tails of membrane proteins, leading to their selection and concentration. Required for many aspects of development and behavior, including negative regulation of vulval differentiation. Required for the dendritic localization of potassium channel kvs-4 in the cholinergic motor neuron DA9. The polypeptide is AP-1 complex subunit mu-1-I (unc-101) (Caenorhabditis elegans).